A 161-amino-acid chain; its full sequence is Nucleotide-binding protein Gura_0717 (161 aa).

This sequence belongs to the YajQ family.

Its function is as follows. Nucleotide-binding protein. This chain is Nucleotide-binding protein Gura_0717, found in Geotalea uraniireducens (strain Rf4) (Geobacter uraniireducens).